Consider the following 547-residue polypeptide: Glucose-6-phosphate isomerase (547 aa).

The active-site Proton donor is the E351. Active-site residues include H382 and K511.

Belongs to the GPI family.

The protein localises to the cytoplasm. The catalysed reaction is alpha-D-glucose 6-phosphate = beta-D-fructose 6-phosphate. It functions in the pathway carbohydrate biosynthesis; gluconeogenesis. The protein operates within carbohydrate degradation; glycolysis; D-glyceraldehyde 3-phosphate and glycerone phosphate from D-glucose: step 2/4. Catalyzes the reversible isomerization of glucose-6-phosphate to fructose-6-phosphate. The sequence is that of Glucose-6-phosphate isomerase from Xanthobacter autotrophicus (strain ATCC BAA-1158 / Py2).